The following is a 334-amino-acid chain: Transcription initiation factor IIB (334 aa).

The TFIIB-type zinc-finger motif lies at Glu34–Gln65. 4 residues coordinate Zn(2+): Cys38, Cys41, Cys57, and Cys60. 2 tandem repeats follow at residues Ser151–Leu234 and Asp245–Glu326.

This sequence belongs to the TFIIB family.

Stabilizes TBP binding to an archaeal box-A promoter. Also responsible for recruiting RNA polymerase II to the pre-initiation complex (DNA-TBP-TFIIB). The chain is Transcription initiation factor IIB from Methanococcus aeolicus (strain ATCC BAA-1280 / DSM 17508 / OCM 812 / Nankai-3).